The chain runs to 124 residues: Fluoride-specific ion channel FluC (124 aa).

4 helical membrane passes run 3 to 23 (VLLI…VSNL), 34 to 54 (IGTL…FIFI), 68 to 88 (LLLI…IETF), and 100 to 120 (ALNV…GVLI). Na(+) is bound by residues glycine 75 and threonine 78.

It belongs to the fluoride channel Fluc/FEX (TC 1.A.43) family.

The protein localises to the cell inner membrane. It carries out the reaction fluoride(in) = fluoride(out). With respect to regulation, na(+) is not transported, but it plays an essential structural role and its presence is essential for fluoride channel function. Functionally, fluoride-specific ion channel. Important for reducing fluoride concentration in the cell, thus reducing its toxicity. This Coxiella burnetii (strain CbuK_Q154) (Coxiella burnetii (strain Q154)) protein is Fluoride-specific ion channel FluC.